Consider the following 158-residue polypeptide: Large ribosomal subunit protein uL11 (158 aa).

Residues 1-21 (MAQSVKTMVEGGKATTGPPIG) are disordered.

This sequence belongs to the universal ribosomal protein uL11 family. Part of the ribosomal stalk of the 50S ribosomal subunit. Interacts with L10 and the large rRNA to form the base of the stalk. L10 forms an elongated spine to which L12 dimers bind in a sequential fashion forming a multimeric L10(L12)X complex.

In terms of biological role, forms part of the ribosomal stalk which helps the ribosome interact with GTP-bound translation factors. The sequence is that of Large ribosomal subunit protein uL11 from Thermoplasma volcanium (strain ATCC 51530 / DSM 4299 / JCM 9571 / NBRC 15438 / GSS1).